The sequence spans 152 residues: Small ribosomal subunit protein uS15 (152 aa).

The segment covering 1-19 (MAKMHTRRKGRSRSTRPVR) has biased composition (basic residues). Residues 1 to 21 (MAKMHTRRKGRSRSTRPVRKT) are disordered.

Belongs to the universal ribosomal protein uS15 family. As to quaternary structure, part of the 30S ribosomal subunit.

The chain is Small ribosomal subunit protein uS15 from Methanocella arvoryzae (strain DSM 22066 / NBRC 105507 / MRE50).